The chain runs to 1091 residues: Neural cell adhesion molecule 1 (1091 aa).

Residues 1-19 form the signal peptide; that stretch reads MLPAAALPWTLFFLGAAAS. Ig-like C2-type domains follow at residues 20–113, 116–205, 212–301, 308–403, and 406–495; these read LQVD…VNVK, QKLM…KDIQ, PSVR…ATIH, PKIT…LEVQ, and PKLQ…FILV. Topologically, residues 20–711 are extracellular; that stretch reads LQVDIVPSQG…STSPTSGLGT (692 aa). Intrachain disulfides connect Cys-41-Cys-96 and Cys-139-Cys-189. Residues 152-156 and 161-165 contribute to the heparin site; these read KHKGR and KKDVR. Residue Asn-222 is glycosylated (N-linked (GlcNAc...) asparagine). The cysteines at positions 235 and 287 are disulfide-linked. 5 N-linked (GlcNAc...) asparagine glycosylation sites follow: Asn-315, Asn-347, Asn-423, Asn-449, and Asn-478. Cys-329 and Cys-385 are oxidised to a cystine. An intrachain disulfide couples Cys-426 to Cys-479. Fibronectin type-III domains follow at residues 499 to 598 and 600 to 696; these read TPSS…TQPV and EPSA…SAQP. Residues 712-729 form a helical membrane-spanning segment; that stretch reads AAIVGILIVIFVLLLVAV. The Cytoplasmic portion of the chain corresponds to 730-1091; sequence DVTCYFLNKC…ATEIRHLQQK (362 aa). Disordered regions lie at residues 756–809, 840–916, 937–1023, and 1041–1091; these read GAKG…TEPE, ATAQ…NNLS, ETSK…GTFK, and TPAS…LQQK. Basic and acidic residues predominate over residues 758 to 799; the sequence is KGKDMEEGKAAFSKDESKEPIVEVRTEEERTPNHDGGKHTEP. A compositionally biased stretch (low complexity) spans 845–856; sequence SPTSETTTLTSS. Polar residues-rich tracts occupy residues 904 to 916 and 980 to 1012; these read DTPS…NNLS and QPST…PSQN. 2 stretches are compositionally biased toward basic and acidic residues: residues 1013 to 1023 and 1068 to 1091; these read EDFKMDEGTFK and KTEK…LQQK.

Post-translationally, polysialylated by ST8SIA2 and ST8SIA4. Polysialylation modulates cell interactions by confering both attractive and repulsive properties that are highly regulated by ST8SIA2 and ST8SIA4. Polysialylation is formed on a-2,3-linked sialic acid of core glycans.

The protein localises to the cell membrane. This protein is a cell adhesion molecule involved in neuron-neuron adhesion, neurite fasciculation, outgrowth of neurites, etc. The sequence is that of Neural cell adhesion molecule 1 from Gallus gallus (Chicken).